The sequence spans 354 residues: GDSL esterase/lipase At3g09930 (354 aa).

The N-terminal stretch at 1-24 (MELPKLLISLFLFSFSSFFLGAES) is a signal peptide. S46 serves as the catalytic Nucleophile. 5 N-linked (GlcNAc...) asparagine glycosylation sites follow: N133, N233, N237, N256, and N300. Active-site residues include D329 and H332.

This sequence belongs to the 'GDSL' lipolytic enzyme family.

It is found in the secreted. In Arabidopsis thaliana (Mouse-ear cress), this protein is GDSL esterase/lipase At3g09930.